Consider the following 319-residue polypeptide: Acetyl-coenzyme A carboxylase carboxyl transferase subunit alpha (319 aa).

Residues 35–296 (DLEKEIKQLE…KQRLLEQLKE (262 aa)) form the CoA carboxyltransferase C-terminal domain.

Belongs to the AccA family. Acetyl-CoA carboxylase is a heterohexamer composed of biotin carboxyl carrier protein (AccB), biotin carboxylase (AccC) and two subunits each of ACCase subunit alpha (AccA) and ACCase subunit beta (AccD).

The protein localises to the cytoplasm. It carries out the reaction N(6)-carboxybiotinyl-L-lysyl-[protein] + acetyl-CoA = N(6)-biotinyl-L-lysyl-[protein] + malonyl-CoA. The protein operates within lipid metabolism; malonyl-CoA biosynthesis; malonyl-CoA from acetyl-CoA: step 1/1. Its function is as follows. Component of the acetyl coenzyme A carboxylase (ACC) complex. First, biotin carboxylase catalyzes the carboxylation of biotin on its carrier protein (BCCP) and then the CO(2) group is transferred by the carboxyltransferase to acetyl-CoA to form malonyl-CoA. This chain is Acetyl-coenzyme A carboxylase carboxyl transferase subunit alpha, found in Aliivibrio fischeri (strain MJ11) (Vibrio fischeri).